We begin with the raw amino-acid sequence, 54 residues long: Large ribosomal subunit protein bL33 (54 aa).

This sequence belongs to the bacterial ribosomal protein bL33 family.

This Chloroflexus aurantiacus (strain ATCC 29366 / DSM 635 / J-10-fl) protein is Large ribosomal subunit protein bL33.